Consider the following 436-residue polypeptide: Glutamate-1-semialdehyde 2,1-aminomutase 2 (436 aa).

Lysine 271 bears the N6-(pyridoxal phosphate)lysine mark.

The protein belongs to the class-III pyridoxal-phosphate-dependent aminotransferase family. HemL subfamily. Homodimer. Pyridoxal 5'-phosphate is required as a cofactor.

Its subcellular location is the cytoplasm. The enzyme catalyses (S)-4-amino-5-oxopentanoate = 5-aminolevulinate. The protein operates within porphyrin-containing compound metabolism; protoporphyrin-IX biosynthesis; 5-aminolevulinate from L-glutamyl-tRNA(Glu): step 2/2. This Exiguobacterium sibiricum (strain DSM 17290 / CCUG 55495 / CIP 109462 / JCM 13490 / 255-15) protein is Glutamate-1-semialdehyde 2,1-aminomutase 2.